The primary structure comprises 386 residues: Acetylornithine aminotransferase (386 aa).

Pyridoxal 5'-phosphate contacts are provided by residues 94 to 95 (GT) and phenylalanine 121. Arginine 124 is a binding site for N(2)-acetyl-L-ornithine. 206-209 (DEVQ) provides a ligand contact to pyridoxal 5'-phosphate. Lysine 235 carries the post-translational modification N6-(pyridoxal phosphate)lysine. Position 263 (serine 263) interacts with N(2)-acetyl-L-ornithine. Threonine 264 lines the pyridoxal 5'-phosphate pocket.

Belongs to the class-III pyridoxal-phosphate-dependent aminotransferase family. ArgD subfamily. Homodimer. It depends on pyridoxal 5'-phosphate as a cofactor.

The protein resides in the cytoplasm. It carries out the reaction N(2)-acetyl-L-ornithine + 2-oxoglutarate = N-acetyl-L-glutamate 5-semialdehyde + L-glutamate. Its pathway is amino-acid biosynthesis; L-arginine biosynthesis; N(2)-acetyl-L-ornithine from L-glutamate: step 4/4. The sequence is that of Acetylornithine aminotransferase from Listeria monocytogenes serovar 1/2a (strain ATCC BAA-679 / EGD-e).